A 269-amino-acid chain; its full sequence is ATP synthase subunit gamma, mitochondrial (269 aa).

As to quaternary structure, F-type ATP synthases have 2 components, the catalytic core F(1) and the membrane-embedded component F(0), linked together by a central stalk and a peripheral stalk. The central stalk, also called rotor shaft, is often seen as part of F(1). The peripheral stalk is seen as part of F(0). F(0) contains the membrane channel next to the rotor. F-type ATP synthases form dimers but each monomer functions independently in ATP generation. The dimer consists of 18 different polypeptides: ATP1 (subunit alpha, part of F(1), 3 molecules per monomer), ATP2 (subunit beta, part of F(1), 3 molecules per monomer), ATP3 (subunit gamma, part of the central stalk), ATP4 (subunit b, part of the peripheral stalk), ATP5/OSCP (subunit 5/OSCP, part of the peripheral stalk), ATP6 (subunit a, part of the peripheral stalk), ATP7 (subunit d, part of the peripheral stalk), ATP8 (subunit 8, part of the peripheral stalk), OLI1 (subunit c, part of the rotor, 10 molecules per monomer), ATP14 (subunit h, part of the peripheral stalk), ATP15 (subunit epsilon, part of the central stalk), ATP16 (subunit delta, part of the central stalk), ATP17 (subunit f, part of the peripheral stalk), ATP18 (subunit i/j, part of the peripheral stalk). Dimer-specific subunits are ATP19 (subunit k, at interface between monomers), ATP20 (subunit g, at interface between monomers), TIM11 (subunit e, at interface between monomers). Also contains subunit L.

The protein localises to the mitochondrion inner membrane. Functionally, mitochondrial membrane ATP synthase (F(1)F(0) ATP synthase or Complex V) produces ATP from ADP in the presence of a proton gradient across the membrane which is generated by electron transport complexes of the respiratory chain. F-type ATP synthases consist of two structural domains, F(1) - containing the extramembraneous catalytic core, and F(0) - containing the membrane proton channel, linked together by a central stalk and a peripheral stalk. During catalysis, ATP synthesis in the catalytic domain of F(1) is coupled via a rotary mechanism of the central stalk subunits to proton translocation. Part of the complex F(1) domain and the central stalk which is part of the complex rotary element. The gamma/ATP3 subunit protrudes into the catalytic domain formed of alpha/ATP1(3)beta/ATP2(3). Rotation of the central stalk against the surrounding alpha/ATP1(3)beta/ATP2(3) subunits leads to hydrolysis of ATP in three separate catalytic sites on the beta/ATP2 subunits. The chain is ATP synthase subunit gamma, mitochondrial from Pichia angusta (Yeast).